Here is a 184-residue protein sequence, read N- to C-terminus: GTP-binding protein Rheb (184 aa).

Residue Lys-8 forms a Glycyl lysine isopeptide (Lys-Gly) (interchain with G-Cter in ubiquitin) linkage. GDP contacts are provided by Ser-16, Val-17, Gly-18, Lys-19, Ser-20, Ser-21, Val-32, and Asp-33. Ser-16 serves as a coordination point for GTP. Positions 18, 19, 20, 21, and 32 each coordinate GTP. Ser-20 serves as a coordination point for Mg(2+). Tyr-35, Thr-38, Asn-119, and Asp-122 together coordinate GTP. The short motif at 35-43 (YDPTIENTF) is the Effector region element. Residue Thr-38 coordinates Mg(2+). Positions 119 and 122 each coordinate GDP. Position 130 is a phosphoserine; by MAPKAPK5 (Ser-130). Ala-150 contacts GDP. Residue Ala-150 coordinates GTP. Cys-181 is modified (cysteine methyl ester). Cys-181 is lipidated: S-farnesyl cysteine. Positions 182-184 (SVM) are cleaved as a propeptide — removed in mature form.

It belongs to the small GTPase superfamily. Rheb family. In terms of assembly, associates with the mTORC1 complex (MTOR, MLST8 and RPTOR) in a guanyl nucleotide-independent manner. Interacts with TSC2. Interacts with MCRS1; the interaction maintains RHEB at the lysosome in its active GTP-bound form and prevents its interaction with the mTORC1 complex inhibitor TSC2, ensuring activation of the mTORC1 complex by RHEB. Interacts (when prenylated) with PDE6D; this promotes release from membranes. Post-translationally, farnesylation is important for efficiently activating mTORC1-mediated signaling. Polyubiquitinated in response to amino acid, promoting its interaction with MTOR and mTORC1 activation. Deubiquitination by ATXN3 promotes recruitment of the TSC-TBC complex and RHEB inactivation by TSC2. Monoubiquitinated at Lys-8 by RNF152, promoting its association with the TSC-TBC complex. Deubiquitinated at Lys-8 by USP4, promoting mTORC1 activation. In terms of processing, phosphorylation by MAPKAPK5 impairs GTP-binding and inactivation. In terms of tissue distribution, ubiquitous. Highest levels observed in skeletal and cardiac muscle.

It is found in the endomembrane system. It localises to the lysosome membrane. Its subcellular location is the golgi apparatus membrane. The protein localises to the endoplasmic reticulum membrane. The protein resides in the cytoplasm. It is found in the cytosol. It carries out the reaction GTP + H2O = GDP + phosphate + H(+). With respect to regulation, alternates between an inactive form bound to GDP and an active form bound to GTP. Inactivated by the TSC-TBC complex via the GTPase activating protein (GAP) domain of TSC2. Autoinhibited by Tyr-35, which constrains the active site conformation, restricting the access of the catalytic Asp-65 to the nucleotide-binding pocket. Specifically inhibited by NR1 (4-bromo-6-(3,4-dichlorophenylthio)-1-(4-(dimethylcarbamoyl)benzyl)-1H-indole-2-carboxylic acid). Its function is as follows. Small GTPase that acts as an allosteric activator of the canonical mTORC1 complex, an evolutionarily conserved central nutrient sensor that stimulates anabolic reactions and macromolecule biosynthesis to promote cellular biomass generation and growth. In response to nutrients, growth factors or amino acids, specifically activates the protein kinase activity of MTOR, the catalytic component of the mTORC1 complex: acts by causing a conformational change that allows the alignment of residues in the active site of MTOR, thereby enhancing the phosphorylation of ribosomal protein S6 kinase (RPS6KB1 and RPS6KB2) and EIF4EBP1 (4E-BP1). RHEB is also required for localization of the TSC-TBC complex to lysosomal membranes. In response to starvation, RHEB is inactivated by the TSC-TBC complex, preventing activation of mTORC1. Has low intrinsic GTPase activity. This is GTP-binding protein Rheb from Homo sapiens (Human).